The sequence spans 200 residues: Recombination protein RecR (200 aa).

Residues 58–73 form a C4-type zinc finger; it reads CEVCHNLAEEGLCAIC. The 96-residue stretch at 81 to 176 folds into the Toprim domain; that stretch reads GLICVVEEPV…DISRLAYGMP (96 aa).

It belongs to the RecR family.

In terms of biological role, may play a role in DNA repair. It seems to be involved in an RecBC-independent recombinational process of DNA repair. It may act with RecF and RecO. The sequence is that of Recombination protein RecR from Magnetococcus marinus (strain ATCC BAA-1437 / JCM 17883 / MC-1).